The chain runs to 301 residues: Probable alpha-L-glutamate ligase (301 aa).

In terms of domain architecture, ATP-grasp spans 104–287 (LQLLSRKGIG…VAGMIVEFIE (184 aa)). Residues lysine 141, 178-179 (EF), aspartate 187, and 211-213 (RSN) each bind ATP. Residues aspartate 248, glutamate 260, and asparagine 262 each contribute to the Mg(2+) site. Positions 248, 260, and 262 each coordinate Mn(2+).

It belongs to the RimK family. Mg(2+) is required as a cofactor. It depends on Mn(2+) as a cofactor.

In Teredinibacter turnerae (strain ATCC 39867 / T7901), this protein is Probable alpha-L-glutamate ligase.